The sequence spans 252 residues: 3-dehydroquinate dehydratase (252 aa).

3-dehydroquinate is bound by residues Ser21, 46–48 (EWR), and Arg82. His143 serves as the catalytic Proton donor/acceptor. The Schiff-base intermediate with substrate role is filled by Lys170. The 3-dehydroquinate site is built by Arg213, Ser232, and Gln236.

This sequence belongs to the type-I 3-dehydroquinase family. In terms of assembly, homodimer.

It carries out the reaction 3-dehydroquinate = 3-dehydroshikimate + H2O. It participates in metabolic intermediate biosynthesis; chorismate biosynthesis; chorismate from D-erythrose 4-phosphate and phosphoenolpyruvate: step 3/7. Inhibited by (2R)-2-methyl-3-dehydroquinic acid. In terms of biological role, involved in the third step of the chorismate pathway, which leads to the biosynthesis of aromatic amino acids. Catalyzes the cis-dehydration of 3-dehydroquinate (DHQ) and introduces the first double bond of the aromatic ring to yield 3-dehydroshikimate. The reaction involves the formation of an imine intermediate between the keto group of 3-dehydroquinate and the epsilon-amino group of a Lys-170 at the active site. The chain is 3-dehydroquinate dehydratase from Salmonella typhimurium (strain LT2 / SGSC1412 / ATCC 700720).